Here is a 590-residue protein sequence, read N- to C-terminus: Zinc finger protein 703 (590 aa).

Polar residues predominate over residues 1-14 (MSDSPAGSNPRTPE). Disordered regions lie at residues 1 to 43 (MSDS…DPLR), 96 to 293 (CSQI…AGHV), and 341 to 366 (LVGG…LTGA). An N-acetylserine modification is found at Ser-2. 4 stretches are compositionally biased toward low complexity: residues 27–37 (PAVPAAVSLLP), 128–139 (RSAPGAASAAAA), 171–189 (GSSS…PGDK), and 207–219 (APVS…SSPG). The segment covering 241–251 (ELDKKDQEPKP) has biased composition (basic and acidic residues). At Ser-252 the chain carries Phosphoserine. 2 stretches are compositionally biased toward gly residues: residues 260-273 (RGGG…GGAE) and 341-352 (LVGGQLSGGLGL). The C2H2-type zinc finger occupies 456 to 484 (HSCNWVAASGPCDKRFATSEELLSHLRTH). Omega-N-methylarginine is present on Arg-580.

Belongs to the Elbow/Noc family. As to quaternary structure, interacts with TLE4; increases transcriptional repression. Interacts with DCAF7 and PHB2. May interact with HSPD1. In terms of tissue distribution, expressed in mammary epithelium.

It localises to the nucleus. The protein resides in the cytoplasm. In terms of biological role, transcriptional corepressor which does not bind directly to DNA and may regulate transcription through recruitment of histone deacetylases to gene promoters. Regulates cell adhesion, migration and proliferation. May be required for segmental gene expression during hindbrain development. The protein is Zinc finger protein 703 (ZNF703) of Homo sapiens (Human).